Reading from the N-terminus, the 174-residue chain is Small ribosomal subunit protein uS5 (174 aa).

Residues 18-81 enclose the S5 DRBM domain; sequence LKDRLVSVNR…EDAKKNLVKI (64 aa).

Belongs to the universal ribosomal protein uS5 family. In terms of assembly, part of the 30S ribosomal subunit. Contacts proteins S4 and S8.

In terms of biological role, with S4 and S12 plays an important role in translational accuracy. Functionally, located at the back of the 30S subunit body where it stabilizes the conformation of the head with respect to the body. This is Small ribosomal subunit protein uS5 from Flavobacterium psychrophilum (strain ATCC 49511 / DSM 21280 / CIP 103535 / JIP02/86).